Reading from the N-terminus, the 860-residue chain is Probable beta-glucosidase A (860 aa).

The first 19 residues, 1–19 (MRFTSIEAVALTAVSLASA), serve as a signal peptide directing secretion. 3 N-linked (GlcNAc...) asparagine glycosylation sites follow: Asn-61, Asn-211, and Asn-252. Asp-280 is a catalytic residue. N-linked (GlcNAc...) asparagine glycans are attached at residues Asn-315, Asn-322, Asn-354, Asn-387, Asn-442, Asn-523, Asn-542, Asn-564, Asn-658, Asn-690, and Asn-712.

This sequence belongs to the glycosyl hydrolase 3 family.

The protein localises to the secreted. The catalysed reaction is Hydrolysis of terminal, non-reducing beta-D-glucosyl residues with release of beta-D-glucose.. It participates in glycan metabolism; cellulose degradation. Beta-glucosidases are one of a number of cellulolytic enzymes involved in the degradation of cellulosic biomass. Catalyzes the last step releasing glucose from the inhibitory cellobiose. This chain is Probable beta-glucosidase A (bglA), found in Aspergillus niger (strain ATCC MYA-4892 / CBS 513.88 / FGSC A1513).